The sequence spans 365 residues: Probable galacturonosyltransferase-like 10 (365 aa).

Over 1–10 (MMSGSRLASR) the chain is Cytoplasmic. A helical; Signal-anchor for type II membrane protein transmembrane segment spans residues 11 to 31 (LIIIFSIISTSFFTVESIRLF). Over 32–365 (PDSFDDASSD…LQYNQELEIL (334 aa)) the chain is Lumenal. N-linked (GlcNAc...) asparagine glycosylation is present at N209.

Belongs to the glycosyltransferase 8 family.

Its subcellular location is the golgi apparatus membrane. It participates in glycan metabolism; pectin biosynthesis. In terms of biological role, may be involved in pectin and/or xylans biosynthesis in cell walls. This chain is Probable galacturonosyltransferase-like 10 (GATL10), found in Arabidopsis thaliana (Mouse-ear cress).